An 893-amino-acid polypeptide reads, in one-letter code: DNA mismatch repair protein MutS (893 aa).

The segment covering 1–17 (MESTMSSASTNASPPSA) has biased composition (low complexity). The tract at residues 1 to 22 (MESTMSSASTNASPPSASEKHT) is disordered. An ATP-binding site is contributed by 641–648 (GPNMGGKS).

The protein belongs to the DNA mismatch repair MutS family.

This protein is involved in the repair of mismatches in DNA. It is possible that it carries out the mismatch recognition step. This protein has a weak ATPase activity. This is DNA mismatch repair protein MutS from Herminiimonas arsenicoxydans.